The following is a 217-amino-acid chain: Translation initiation factor IF-3 (217 aa).

The segment at 185 to 217 is disordered; the sequence is YNLPETETTRIREENREKQKEKENTSKEGNKDA. The span at 191 to 217 shows a compositional bias: basic and acidic residues; sequence ETTRIREENREKQKEKENTSKEGNKDA.

Belongs to the IF-3 family. As to quaternary structure, monomer.

The protein resides in the cytoplasm. IF-3 binds to the 30S ribosomal subunit and shifts the equilibrium between 70S ribosomes and their 50S and 30S subunits in favor of the free subunits, thus enhancing the availability of 30S subunits on which protein synthesis initiation begins. The protein is Translation initiation factor IF-3 of Methylacidiphilum infernorum (isolate V4) (Methylokorus infernorum (strain V4)).